The sequence spans 179 residues: Adenine phosphoribosyltransferase (179 aa).

It belongs to the purine/pyrimidine phosphoribosyltransferase family. In terms of assembly, homodimer.

Its subcellular location is the cytoplasm. The enzyme catalyses AMP + diphosphate = 5-phospho-alpha-D-ribose 1-diphosphate + adenine. Its pathway is purine metabolism; AMP biosynthesis via salvage pathway; AMP from adenine: step 1/1. Functionally, catalyzes a salvage reaction resulting in the formation of AMP, that is energically less costly than de novo synthesis. The protein is Adenine phosphoribosyltransferase of Helicobacter pylori (strain ATCC 700392 / 26695) (Campylobacter pylori).